The sequence spans 1395 residues: DNA-directed RNA polymerase subunit beta' (1395 aa).

Positions 70, 72, 85, and 88 each coordinate Zn(2+). Positions 470, 472, and 474 each coordinate Mg(2+). Zn(2+) contacts are provided by C815, C889, C896, and C899.

Belongs to the RNA polymerase beta' chain family. As to quaternary structure, the RNAP catalytic core consists of 2 alpha, 1 beta, 1 beta' and 1 omega subunit. When a sigma factor is associated with the core the holoenzyme is formed, which can initiate transcription. It depends on Mg(2+) as a cofactor. Requires Zn(2+) as cofactor.

It catalyses the reaction RNA(n) + a ribonucleoside 5'-triphosphate = RNA(n+1) + diphosphate. DNA-dependent RNA polymerase catalyzes the transcription of DNA into RNA using the four ribonucleoside triphosphates as substrates. The protein is DNA-directed RNA polymerase subunit beta' of Anaeromyxobacter sp. (strain Fw109-5).